The following is a 362-amino-acid chain: Molybdenum import ATP-binding protein ModC (362 aa).

The ABC transporter domain occupies valine 2–aspartate 236. An ATP-binding site is contributed by glycine 34 to threonine 41. A Mop domain is found at histidine 297–alanine 362.

It belongs to the ABC transporter superfamily. Molybdate importer (TC 3.A.1.8) family. As to quaternary structure, the complex is composed of two ATP-binding proteins (ModC), two transmembrane proteins (ModB) and a solute-binding protein (ModA).

Its subcellular location is the cell inner membrane. The catalysed reaction is molybdate(out) + ATP + H2O = molybdate(in) + ADP + phosphate + H(+). In terms of biological role, part of the ABC transporter complex ModABC involved in molybdenum import. Responsible for energy coupling to the transport system. In Pseudomonas syringae pv. tomato (strain ATCC BAA-871 / DC3000), this protein is Molybdenum import ATP-binding protein ModC.